A 200-amino-acid polypeptide reads, in one-letter code: GTP cyclohydrolase-2 (200 aa).

49–53 (RIHSE) is a GTP binding site. Residues cysteine 54, cysteine 65, and cysteine 67 each coordinate Zn(2+). GTP contacts are provided by residues glutamine 70, 92-94 (EGR), and threonine 114. Catalysis depends on aspartate 126, which acts as the Proton acceptor. The Nucleophile role is filled by arginine 128. GTP-binding residues include threonine 149 and lysine 154.

Belongs to the GTP cyclohydrolase II family. Requires Zn(2+) as cofactor.

The catalysed reaction is GTP + 4 H2O = 2,5-diamino-6-hydroxy-4-(5-phosphoribosylamino)-pyrimidine + formate + 2 phosphate + 3 H(+). The protein operates within cofactor biosynthesis; riboflavin biosynthesis; 5-amino-6-(D-ribitylamino)uracil from GTP: step 1/4. Functionally, catalyzes the conversion of GTP to 2,5-diamino-6-ribosylamino-4(3H)-pyrimidinone 5'-phosphate (DARP), formate and pyrophosphate. The polypeptide is GTP cyclohydrolase-2 (Saccharophagus degradans (strain 2-40 / ATCC 43961 / DSM 17024)).